Consider the following 124-residue polypeptide: 14 kDa phosphohistidine phosphatase (124 aa).

K20 provides a ligand contact to substrate. Residue H52 is the Proton acceptor of the active site. 93–95 is a substrate binding site; sequence SMG.

It belongs to the janus family. In terms of assembly, monomer.

It localises to the cytoplasm. It catalyses the reaction N(pros)-phospho-L-histidyl-[protein] + H2O = L-histidyl-[protein] + phosphate. The enzyme catalyses N(tele)-phospho-L-histidyl-[protein] + H2O = L-histidyl-[protein] + phosphate. Exhibits phosphohistidine phosphatase activity. In Mus musculus (Mouse), this protein is 14 kDa phosphohistidine phosphatase (Phpt1).